We begin with the raw amino-acid sequence, 264 residues long: GTP cyclohydrolase FolE2 (264 aa).

It belongs to the GTP cyclohydrolase IV family.

It carries out the reaction GTP + H2O = 7,8-dihydroneopterin 3'-triphosphate + formate + H(+). It functions in the pathway cofactor biosynthesis; 7,8-dihydroneopterin triphosphate biosynthesis; 7,8-dihydroneopterin triphosphate from GTP: step 1/1. In terms of biological role, converts GTP to 7,8-dihydroneopterin triphosphate. The polypeptide is GTP cyclohydrolase FolE2 (Akkermansia muciniphila (strain ATCC BAA-835 / DSM 22959 / JCM 33894 / BCRC 81048 / CCUG 64013 / CIP 107961 / Muc)).